The following is a 289-amino-acid chain: Energy-coupling factor transporter ATP-binding protein EcfA2 (289 aa).

The region spanning 3–246 (IRFKQVDFTY…TQWLKEKQLG (244 aa)) is the ABC transporter domain. 40-47 (GHTGSGKS) is a binding site for ATP.

The protein belongs to the ABC transporter superfamily. Energy-coupling factor EcfA family. As to quaternary structure, forms a stable energy-coupling factor (ECF) transporter complex composed of 2 membrane-embedded substrate-binding proteins (S component), 2 ATP-binding proteins (A component) and 2 transmembrane proteins (T component).

Its subcellular location is the cell membrane. Its function is as follows. ATP-binding (A) component of a common energy-coupling factor (ECF) ABC-transporter complex. Unlike classic ABC transporters this ECF transporter provides the energy necessary to transport a number of different substrates. The polypeptide is Energy-coupling factor transporter ATP-binding protein EcfA2 (Enterococcus faecalis (strain ATCC 700802 / V583)).